The chain runs to 292 residues: Acetylglutamate kinase (292 aa).

Residues glycine 60 to glycine 61, arginine 82, and asparagine 187 each bind substrate.

The protein belongs to the acetylglutamate kinase family. ArgB subfamily.

The protein resides in the cytoplasm. The enzyme catalyses N-acetyl-L-glutamate + ATP = N-acetyl-L-glutamyl 5-phosphate + ADP. It participates in amino-acid biosynthesis; L-arginine biosynthesis; N(2)-acetyl-L-ornithine from L-glutamate: step 2/4. Its function is as follows. Catalyzes the ATP-dependent phosphorylation of N-acetyl-L-glutamate. This Methanobrevibacter smithii (strain ATCC 35061 / DSM 861 / OCM 144 / PS) protein is Acetylglutamate kinase.